A 328-amino-acid chain; its full sequence is DNA-directed RNA polymerase subunit alpha (328 aa).

Residues 1-231 (MIYQMQMPEK…EHVSLFANFS (231 aa)) are alpha N-terminal domain (alpha-NTD). Residues 252–328 (MRKMLLTRIE…MDITKYQMKG (77 aa)) are alpha C-terminal domain (alpha-CTD).

It belongs to the RNA polymerase alpha chain family. In terms of assembly, homodimer. The RNAP catalytic core consists of 2 alpha, 1 beta, 1 beta' and 1 omega subunit. When a sigma factor is associated with the core the holoenzyme is formed, which can initiate transcription.

It carries out the reaction RNA(n) + a ribonucleoside 5'-triphosphate = RNA(n+1) + diphosphate. Its function is as follows. DNA-dependent RNA polymerase catalyzes the transcription of DNA into RNA using the four ribonucleoside triphosphates as substrates. The polypeptide is DNA-directed RNA polymerase subunit alpha (Chlorobium phaeobacteroides (strain BS1)).